Reading from the N-terminus, the 335-residue chain is MTRPGVGVAITGSGSAVPSTTLSNDQLSQLVETSDEWIRSRTGIGQRRVAQPQIESLSSLAAAAGQSALEAAGLEATSVDLILLATSTPDDLFGSACQVQAALGATQAVAFDLTAACSGFLFALVTGAQFIRSGAYRTVLVIGADVLSRWTDWSDRRTCVLFGDGAGAVVLQASEIDQLLGFEMRSDGSLNGCLTLAYQADNQSLLSDIEIAQGTYQPVAMNGQEVYRFAVKRVPEILEKTLFHAGIDRQEVDWLLLHQANQRILDAVADRLDISRDRVLSNLVNYGNTSSATIPLVLDEAVKAGKIQSGDLIAASGFGAGLSWGAALFRWGTVV.

Residues Cys-117 and His-258 contribute to the active site. The interval 259 to 263 (QANQR) is ACP-binding. Residue Asn-288 is part of the active site.

The protein belongs to the thiolase-like superfamily. FabH family. In terms of assembly, homodimer.

Its subcellular location is the cytoplasm. The enzyme catalyses malonyl-[ACP] + acetyl-CoA + H(+) = 3-oxobutanoyl-[ACP] + CO2 + CoA. It participates in lipid metabolism; fatty acid biosynthesis. In terms of biological role, catalyzes the condensation reaction of fatty acid synthesis by the addition to an acyl acceptor of two carbons from malonyl-ACP. Catalyzes the first condensation reaction which initiates fatty acid synthesis and may therefore play a role in governing the total rate of fatty acid production. Possesses both acetoacetyl-ACP synthase and acetyl transacylase activities. Its substrate specificity determines the biosynthesis of branched-chain and/or straight-chain of fatty acids. The polypeptide is Beta-ketoacyl-[acyl-carrier-protein] synthase III (Synechococcus elongatus (strain ATCC 33912 / PCC 7942 / FACHB-805) (Anacystis nidulans R2)).